Here is a 1420-residue protein sequence, read N- to C-terminus: Apolipoprotein(a) (1420 aa).

Low complexity predominate over residues T19–P30. Residues T19 to G46 are disordered. 5 Kringle domains span residues E49 to C127, E163 to C241, E277 to C355, E391 to C469, and E505 to C583. Cystine bridges form between C50-C127, C71-C110, C99-C122, C164-C241, C185-C224, C213-C236, C278-C355, C299-C338, C327-C350, C392-C469, C413-C452, C441-C464, C506-C583, C527-C566, and C555-C578. Positions P598–V617 are disordered. The span at P600–E616 shows a compositional bias: polar residues. Kringle domains are found at residues D619–C697, D725–C803, D839–C917, D953–C1031, and Q1067–C1145. 19 disulfide bridges follow: C620/C697, C641/C680, C669/C692, C726/C803, C747/C786, C775/C798, C840/C917, C861/C900, C889/C912, C954/C1031, C975/C1014, C1003/C1026, C1068/C1145, C1089/C1128, C1117/C1140, C1217/C1233, C1309/C1376, C1339/C1355, and C1366/C1394. The Peptidase S1 domain occupies I1191–R1418.

This sequence belongs to the peptidase S1 family. Plasminogen subfamily. As to quaternary structure, disulfide-linked to apo-B100. Binds to fibronectin and decorin. Post-translationally, N- and O-glycosylated.

In terms of biological role, apo(a) is the main constituent of lipoprotein(a) (Lp(a)). It has serine proteinase activity and is able of autoproteolysis. Inhibits tissue-type plasminogen activator 1. Lp(a) may be a ligand for megalin/Gp 330. The chain is Apolipoprotein(a) (LPA) from Macaca mulatta (Rhesus macaque).